The chain runs to 255 residues: Flap endonuclease Xni (255 aa).

Asp105 serves as a coordination point for Mg(2+). The 93-residue stretch at 162–254 (EHKQFIDYLA…LKQFRLPKAN (93 aa)) folds into the 5'-3' exonuclease domain. Positions 172, 173, 181, 183, and 186 each coordinate K(+). The interval 185 to 190 (GIGPKS) is interaction with DNA.

It belongs to the Xni family. It depends on Mg(2+) as a cofactor. Requires K(+) as cofactor.

Has flap endonuclease activity. During DNA replication, flap endonucleases cleave the 5'-overhanging flap structure that is generated by displacement synthesis when DNA polymerase encounters the 5'-end of a downstream Okazaki fragment. This Shewanella piezotolerans (strain WP3 / JCM 13877) protein is Flap endonuclease Xni.